Here is a 536-residue protein sequence, read N- to C-terminus: Glycine--tRNA ligase (536 aa).

The tract at residues 56-67 is insert; the sequence is LVSPAGAPSTFE. Residues R106 and E213 each coordinate substrate. ATP-binding positions include 245 to 247, 255 to 260, and 333 to 334; these read RNE, FRSREF, and EL. Residue 260 to 264 coordinates substrate; sequence FEQME. The interval 350 to 372 is insert; the sequence is EGKLDPATNPMTVELNEHGKPKH. A substrate-binding site is contributed by 396-400; sequence EPSAG. 400–403 serves as a coordination point for ATP; it reads GADR.

Belongs to the class-II aminoacyl-tRNA synthetase family. In terms of assembly, homodimer.

Its subcellular location is the cytoplasm. The catalysed reaction is tRNA(Gly) + glycine + ATP = glycyl-tRNA(Gly) + AMP + diphosphate. Functionally, catalyzes the attachment of glycine to tRNA(Gly). The sequence is that of Glycine--tRNA ligase from Rhodopirellula baltica (strain DSM 10527 / NCIMB 13988 / SH1).